The primary structure comprises 353 residues: UDP-3-O-acylglucosamine N-acyltransferase (353 aa).

The active-site Proton acceptor is the histidine 242.

This sequence belongs to the transferase hexapeptide repeat family. LpxD subfamily. As to quaternary structure, homotrimer.

The catalysed reaction is a UDP-3-O-[(3R)-3-hydroxyacyl]-alpha-D-glucosamine + a (3R)-hydroxyacyl-[ACP] = a UDP-2-N,3-O-bis[(3R)-3-hydroxyacyl]-alpha-D-glucosamine + holo-[ACP] + H(+). Its pathway is bacterial outer membrane biogenesis; LPS lipid A biosynthesis. Its function is as follows. Catalyzes the N-acylation of UDP-3-O-acylglucosamine using 3-hydroxyacyl-ACP as the acyl donor. Is involved in the biosynthesis of lipid A, a phosphorylated glycolipid that anchors the lipopolysaccharide to the outer membrane of the cell. The protein is UDP-3-O-acylglucosamine N-acyltransferase of Pseudomonas paraeruginosa (strain DSM 24068 / PA7) (Pseudomonas aeruginosa (strain PA7)).